The sequence spans 107 residues: V-type proton ATPase subunit G (107 aa).

The protein belongs to the V-ATPase G subunit family. In terms of assembly, V-ATPase is a heteromultimeric enzyme composed of a peripheral catalytic V1 complex (components A to H) attached to an integral membrane V0 proton pore complex (components: a, c, c', c'' and d).

Catalytic subunit of the peripheral V1 complex of vacuolar ATPase (V-ATPase). V-ATPase is responsible for acidifying a variety of intracellular compartments in eukaryotic cells. This is V-type proton ATPase subunit G (atp6v1g) from Dictyostelium discoideum (Social amoeba).